The following is a 327-amino-acid chain: Zinc finger protein 444 (327 aa).

Residue Met1 is modified to N-acetylmethionine. A Glycyl lysine isopeptide (Lys-Gly) (interchain with G-Cter in SUMO2) cross-link involves residue Lys8. Residues Ser18 and Ser104 each carry the phosphoserine modification. In terms of domain architecture, SCAN box spans 20 to 104 (WHRFRRFHLG…LEELWGPAAS (85 aa)). The interval 101–171 (PAASPDGSSA…SPPLAPGLPA (71 aa)) is disordered. The segment covering 106–118 (DGSSATRVPQDVT) has biased composition (polar residues). Low complexity predominate over residues 134–148 (PLAGTAPGAEGPAPG). 2 consecutive C2H2-type zinc fingers follow at residues 179–201 (TSCP…RQSH) and 207–229 (HACP…RDTH). Residue Lys190 forms a Glycyl lysine isopeptide (Lys-Gly) (interchain with G-Cter in SUMO2) linkage. Residues 220–243 (EHLRRHRDTHPGSPGSPGPALRPL) form a disordered region. Ser235 carries the phosphoserine modification. 2 consecutive C2H2-type zinc fingers follow at residues 250–272 (HACC…RKTH) and 278–300 (FACW…QRIH). Positions 305–314 (ASAQGAVAPG) are enriched in low complexity. The tract at residues 305-327 (ASAQGAVAPGPDGGGPFPPWPLG) is disordered.

Belongs to the krueppel C2H2-type zinc-finger protein family.

The protein localises to the nucleus. Its function is as follows. Transcriptional regulator. Binds to the 5'-flanking critical region of the SCARF1 promoter. The protein is Zinc finger protein 444 (ZNF444) of Homo sapiens (Human).